A 477-amino-acid polypeptide reads, in one-letter code: UDP-sulfoquinovose synthase, chloroplastic (477 aa).

The tract at residues 1–21 (MAHLLSASCPSVISLSSSSSK) is disordered. Residues 1-86 (MAHLLSASCP…TNNSSSKPKR (86 aa)) constitute a chloroplast transit peptide. NAD(+)-binding positions include 95–96 (YC), 115–119 (DNLVR), 158–159 (DI), arginine 184, and asparagine 202. Arginine 184 is a binding site for substrate. Residues threonine 228 and tyrosine 265 each coordinate substrate. Threonine 228 is an active-site residue. NAD(+)-binding residues include tyrosine 265 and lysine 269. Tyrosine 265 functions as the Proton acceptor in the catalytic mechanism. Lysine 269 is a catalytic residue. Residue glutamine 292 coordinates substrate. An NAD(+)-binding site is contributed by valine 295. Residues 322–325 (ALNR), 337–339 (TVY), and 410–412 (RVE) contribute to the substrate site.

This sequence belongs to the NAD(P)-dependent epimerase/dehydratase family. Homodimer. It depends on NAD(+) as a cofactor.

The protein resides in the plastid. Its subcellular location is the chloroplast. It carries out the reaction sulfite + UDP-alpha-D-glucose + H(+) = UDP-alpha-D-6-sulfoquinovose + H2O. Concentrations above 100 uM sulfite inhibit the reaction. Its function is as follows. Involved in the biosynthesis of sulfolipids found in thylakoid membranes. Converts UDP-glucose and sulfite to the sulfolipid head group precursor UDP-sulfoquinovose. The sequence is that of UDP-sulfoquinovose synthase, chloroplastic (SQD1) from Arabidopsis thaliana (Mouse-ear cress).